The primary structure comprises 147 residues: Large ribosomal subunit protein uL16 (147 aa).

Basic residues predominate over residues 1–16 (MLMPKRVKRRRVHRGR). Residues 1-20 (MLMPKRVKRRRVHRGRMTGQ) form a disordered region.

The protein belongs to the universal ribosomal protein uL16 family. Part of the 50S ribosomal subunit.

Binds 23S rRNA and is also seen to make contacts with the A and possibly P site tRNAs. This Alkaliphilus metalliredigens (strain QYMF) protein is Large ribosomal subunit protein uL16.